Consider the following 519-residue polypeptide: Histidine--tRNA ligase (519 aa).

This sequence belongs to the class-II aminoacyl-tRNA synthetase family. In terms of assembly, homodimer.

The protein resides in the cytoplasm. It carries out the reaction tRNA(His) + L-histidine + ATP = L-histidyl-tRNA(His) + AMP + diphosphate + H(+). This is Histidine--tRNA ligase from Roseobacter denitrificans (strain ATCC 33942 / OCh 114) (Erythrobacter sp. (strain OCh 114)).